Consider the following 106-residue polypeptide: Probable insulin-like peptide beta-type 1 (106 aa).

The N-terminal stretch at 1–19 (MFSFFTYFLLSALLLSASC) is a signal peptide. The propeptide at 20-51 (RQPSMDTSKADRILREIEMETELENQLSRARR) is removed; by convertase egl-3. Intrachain disulfides connect Cys-60/Cys-89, Cys-72/Cys-102, Cys-76/Cys-103, and Cys-88/Cys-93.

Belongs to the insulin family. In terms of tissue distribution, expressed by ASI and ASJ sensory neurons and weakly by ventral cord motor neurons.

Its subcellular location is the secreted. Its function is as follows. Probable insulin-like peptide which negatively regulates synapse development at the neuromuscular junctions. Probably acts as a daf-2/InsR agonist ligand to prevent dauer formation under optimal environmental conditions. The protein is Probable insulin-like peptide beta-type 1 (ins-4) of Caenorhabditis elegans.